A 143-amino-acid polypeptide reads, in one-letter code: MFLGEYEHTVDEKGRLAIPAKFRAGLAEGLVLTRGFDQNLLLYPMPVWRELAARINALPITQPSARNLRRLMFAGASDLGLDKQGRIVLPPNLRQYATITNQAVVTGMDSFIEIWSAERWQTVLDSFADEAPALAEHVSAFGI.

SpoVT-AbrB domains lie at 5-47 (EYEH…PMPV) and 76-119 (ASDL…SAER).

Belongs to the MraZ family. As to quaternary structure, forms oligomers.

The protein localises to the cytoplasm. The protein resides in the nucleoid. This Herpetosiphon aurantiacus (strain ATCC 23779 / DSM 785 / 114-95) protein is Transcriptional regulator MraZ.